Reading from the N-terminus, the 616-residue chain is MLVRLTKLSCPAYHWFHALKIKKCLPLCAPRCSSTSAVPQITTHYTVHPREKDKRWEGVNMERFAEEADVVIVGAGPAGLSAAIRLKQLAAEQGKDIRVCLVEKAAQIGAHTLSGACLDPAAFKELFPDWKEKGAPLNTPVTEDRFAILTEKHRIPVPILPGLPMNNHGNYIVRLGHLVSWMGEQAEALGVEVYPGYAAAEVLYHEDGSVKGIATNDVGIQKDGAPKTTFERGLELHAKVTVFAEGCHGHLAKQLYKKFDLRASCDAQTYGIGLKELWIIDEKKWKPGRVDHTVGWPLDRHTYGGSFLYHLNEGEPLVAVGFVVGLDYQNPYLSPFREFQRWKHHPSIQPTLEGGKRIAYGARALNEGGLQSIPKLTFPGGLLIGCSPGFMNVPKIKGTHTAMKSGSLAAESIFKQLTSENLQSKTTGLHVTEYEDNLKQSWVWKELHAVRNIRPSCHGILGVYGGMIYTGIFYWILRGMEPWTLKHKGSDSDQLKPAKDCTPIEYPKPDGQISFDLLSSVALSGTNHEHDQPAHLTLKDDSIPVNRNLSIYDGPEQRFCPAGVYEFVPLEQGDGFRLQINAQNCVHCKTCDIKDPSQNINWVVPEGGGGPAYNGM.

The transit peptide at 1–32 (MLVRLTKLSCPAYHWFHALKIKKCLPLCAPRC) directs the protein to the mitochondrion. FAD is bound at residue 70 to 84 (VVIVGAGPAGLSAAI). Lysine 95 bears the N6-acetyllysine mark. Residues 108–129 (IGAHTLSGACLDPAAFKELFPD) lie within the membrane without spanning it. Lysine 131 and lysine 222 each carry N6-acetyllysine. The a ubiquinone site is built by glycine 304 and glycine 305. Residues lysine 356 and lysine 415 each carry the N6-acetyllysine modification. Residues 427–446 (TGLHVTEYEDNLKQSWVWKE) lie within the membrane without spanning it. Serine 550 is subject to Phosphoserine. The [4Fe-4S] cluster site is built by cysteine 560, cysteine 585, cysteine 588, and cysteine 591. The region spanning 576–605 (FRLQINAQNCVHCKTCDIKDPSQNINWVVP) is the 4Fe-4S ferredoxin-type domain.

The protein belongs to the ETF-QO/FixC family. Monomer. The cofactor is [4Fe-4S] cluster. FAD is required as a cofactor. Post-translationally, acetylation of Lys-95 and Lys-222 is observed in liver mitochondria from fasted mice but not from fed mice.

It localises to the mitochondrion inner membrane. The catalysed reaction is a ubiquinone + reduced [electron-transfer flavoprotein] = a ubiquinol + oxidized [electron-transfer flavoprotein] + H(+). In terms of biological role, accepts electrons from ETF and reduces ubiquinone. The chain is Electron transfer flavoprotein-ubiquinone oxidoreductase, mitochondrial (Etfdh) from Mus musculus (Mouse).